Reading from the N-terminus, the 56-residue chain is Preprotein translocase subunit SecG (56 aa).

The Cytoplasmic portion of the chain corresponds to 1-29 (MAKEKATLPPTGAGLMRFFDEDTRAVKVS). Residues 30-49 (PKGVIALTLLLIAFEFILHM) traverse the membrane as a helical segment. Residues 50-56 (FGSSIFG) lie on the Extracellular side of the membrane.

The protein belongs to the SEC61-beta family. As to quaternary structure, component of the protein translocase complex. Heterotrimer consisting of alpha (SecY), beta (SecG) and gamma (SecE) subunits. Can form oligomers of the heterotrimer.

The protein resides in the cell membrane. Involved in protein export. The function of the beta subunit is unknown, but it may be involved in stabilization of the trimeric complex. The protein is Preprotein translocase subunit SecG of Thermococcus kodakarensis (strain ATCC BAA-918 / JCM 12380 / KOD1) (Pyrococcus kodakaraensis (strain KOD1)).